The primary structure comprises 206 residues: Large ribosomal subunit protein uL4 (206 aa).

Belongs to the universal ribosomal protein uL4 family. As to quaternary structure, part of the 50S ribosomal subunit.

In terms of biological role, one of the primary rRNA binding proteins, this protein initially binds near the 5'-end of the 23S rRNA. It is important during the early stages of 50S assembly. It makes multiple contacts with different domains of the 23S rRNA in the assembled 50S subunit and ribosome. Its function is as follows. Forms part of the polypeptide exit tunnel. This Cereibacter sphaeroides (strain KD131 / KCTC 12085) (Rhodobacter sphaeroides) protein is Large ribosomal subunit protein uL4.